A 292-amino-acid chain; its full sequence is 4-hydroxy-tetrahydrodipicolinate synthase (292 aa).

Pyruvate is bound at residue T45. Residue Y133 is the Proton donor/acceptor of the active site. The active-site Schiff-base intermediate with substrate is K161. I203 is a pyruvate binding site.

Belongs to the DapA family. In terms of assembly, homodimer.

It localises to the cytoplasm. It carries out the reaction L-aspartate 4-semialdehyde + pyruvate = (2S,4S)-4-hydroxy-2,3,4,5-tetrahydrodipicolinate + H2O + H(+). It participates in amino-acid biosynthesis; L-lysine biosynthesis via DAP pathway; (S)-tetrahydrodipicolinate from L-aspartate: step 3/4. Catalyzes the condensation of (S)-aspartate-beta-semialdehyde [(S)-ASA] and pyruvate to 4-hydroxy-tetrahydrodipicolinate (HTPA). This Stutzerimonas stutzeri (strain A1501) (Pseudomonas stutzeri) protein is 4-hydroxy-tetrahydrodipicolinate synthase.